Consider the following 111-residue polypeptide: Complement inhibitor CirpT1 (111 aa).

A signal peptide spans M1 to F19. 4 disulfides stabilise this stretch: C40–C64, C59–C98, C76–C99, and C85–C104.

Belongs to the CirpT family. Expressed in salivary glands.

The protein resides in the secreted. Functionally, complement inhibitor. Prevents complement-mediated activation of C5 by sterically preventing direct binding of C5 to its convertase (binding with domains MG4 and MG5). Binds C5 at a different binding site than the other tick complement inhibitors OmCI and RaCI3, and the drug eculizumab. Inhibits the complement in human, rat and guinea pig, and also shows a reduced inhibition in rabbit and pig. The polypeptide is Complement inhibitor CirpT1 (Rhipicephalus pulchellus (Yellow backed tick)).